A 366-amino-acid chain; its full sequence is Neutral protease 2 homolog MGYG_04094 (366 aa).

The N-terminal stretch at 1-19 (MQILAALSAIGALVATATA) is a signal peptide. The propeptide occupies 20–188 (AAVPNAPAKQ…NKSRSTIDKR (169 aa)). 2 disulfide bridges follow: Cys196-Cys267 and Cys274-Cys292. His317 lines the Zn(2+) pocket. Glu318 is a catalytic residue. Residues His321 and Asp332 each coordinate Zn(2+).

Belongs to the peptidase M35 family. The cofactor is Zn(2+).

It localises to the secreted. It catalyses the reaction Preferential cleavage of bonds with hydrophobic residues in P1'. Also 3-Asn-|-Gln-4 and 8-Gly-|-Ser-9 bonds in insulin B chain.. Functionally, secreted metalloproteinase that allows assimilation of proteinaceous substrates. Shows high activities on basic nuclear substrates such as histone and protamine. May be involved in virulence. In Arthroderma gypseum (strain ATCC MYA-4604 / CBS 118893) (Microsporum gypseum), this protein is Neutral protease 2 homolog MGYG_04094.